A 67-amino-acid polypeptide reads, in one-letter code: Small ribosomal subunit protein eS17 (67 aa).

This sequence belongs to the eukaryotic ribosomal protein eS17 family.

This Pyrococcus abyssi (strain GE5 / Orsay) protein is Small ribosomal subunit protein eS17.